We begin with the raw amino-acid sequence, 262 residues long: Ribosomal RNA small subunit methyltransferase A (262 aa).

Residues His-16, Leu-18, Gly-43, Glu-64, Asp-89, and Asn-109 each contribute to the S-adenosyl-L-methionine site.

This sequence belongs to the class I-like SAM-binding methyltransferase superfamily. rRNA adenine N(6)-methyltransferase family. RsmA subfamily.

It is found in the cytoplasm. It catalyses the reaction adenosine(1518)/adenosine(1519) in 16S rRNA + 4 S-adenosyl-L-methionine = N(6)-dimethyladenosine(1518)/N(6)-dimethyladenosine(1519) in 16S rRNA + 4 S-adenosyl-L-homocysteine + 4 H(+). Specifically dimethylates two adjacent adenosines (A1518 and A1519) in the loop of a conserved hairpin near the 3'-end of 16S rRNA in the 30S particle. May play a critical role in biogenesis of 30S subunits. This Xanthomonas euvesicatoria pv. vesicatoria (strain 85-10) (Xanthomonas campestris pv. vesicatoria) protein is Ribosomal RNA small subunit methyltransferase A.